The following is a 314-amino-acid chain: Small ribosomal subunit biogenesis GTPase RsgA (314 aa).

The region spanning 78 to 238 is the CP-type G domain; sequence SEIFREKLIA…IIDSPGFQEF (161 aa). GTP is bound by residues 127–130 and 180–188; these read NKID and GQSGVGKST. Zn(2+) is bound by residues Cys-262, Cys-267, His-269, and Cys-275.

The protein belongs to the TRAFAC class YlqF/YawG GTPase family. RsgA subfamily. As to quaternary structure, monomer. Associates with 30S ribosomal subunit, binds 16S rRNA. Requires Zn(2+) as cofactor.

The protein resides in the cytoplasm. Its function is as follows. One of several proteins that assist in the late maturation steps of the functional core of the 30S ribosomal subunit. Helps release RbfA from mature subunits. May play a role in the assembly of ribosomal proteins into the subunit. Circularly permuted GTPase that catalyzes slow GTP hydrolysis, GTPase activity is stimulated by the 30S ribosomal subunit. This chain is Small ribosomal subunit biogenesis GTPase RsgA, found in Nitrosomonas europaea (strain ATCC 19718 / CIP 103999 / KCTC 2705 / NBRC 14298).